Here is a 351-residue protein sequence, read N- to C-terminus: DNA polymerase IV (351 aa).

The UmuC domain maps to 4–185; the sequence is IIHVDMDCFF…LPLAKIPGVG (182 aa). The Mg(2+) site is built by Asp8 and Asp103. Glu104 is an active-site residue.

The protein belongs to the DNA polymerase type-Y family. In terms of assembly, monomer. Requires Mg(2+) as cofactor.

The protein localises to the cytoplasm. The catalysed reaction is DNA(n) + a 2'-deoxyribonucleoside 5'-triphosphate = DNA(n+1) + diphosphate. In terms of biological role, poorly processive, error-prone DNA polymerase involved in untargeted mutagenesis. Copies undamaged DNA at stalled replication forks, which arise in vivo from mismatched or misaligned primer ends. These misaligned primers can be extended by PolIV. Exhibits no 3'-5' exonuclease (proofreading) activity. May be involved in translesional synthesis, in conjunction with the beta clamp from PolIII. The chain is DNA polymerase IV from Salmonella paratyphi B (strain ATCC BAA-1250 / SPB7).